The sequence spans 293 residues: Bifunctional protein FolD (293 aa).

Residues 165–167 (GRS), Thr-194, and Val-235 contribute to the NADP(+) site.

It belongs to the tetrahydrofolate dehydrogenase/cyclohydrolase family. As to quaternary structure, homodimer.

The catalysed reaction is (6R)-5,10-methylene-5,6,7,8-tetrahydrofolate + NADP(+) = (6R)-5,10-methenyltetrahydrofolate + NADPH. It carries out the reaction (6R)-5,10-methenyltetrahydrofolate + H2O = (6R)-10-formyltetrahydrofolate + H(+). It functions in the pathway one-carbon metabolism; tetrahydrofolate interconversion. Catalyzes the oxidation of 5,10-methylenetetrahydrofolate to 5,10-methenyltetrahydrofolate and then the hydrolysis of 5,10-methenyltetrahydrofolate to 10-formyltetrahydrofolate. The chain is Bifunctional protein FolD from Syntrophus aciditrophicus (strain SB).